A 117-amino-acid chain; its full sequence is Acylphosphatase (117 aa).

The Acylphosphatase-like domain maps to 31–117 (RWRWIIQGQV…RGDDWFEVRY (87 aa)). Catalysis depends on residues Arg46 and Asn64.

Belongs to the acylphosphatase family.

It carries out the reaction an acyl phosphate + H2O = a carboxylate + phosphate + H(+). The protein is Acylphosphatase (acyP) of Synechococcus sp. (strain CC9902).